A 349-amino-acid chain; its full sequence is Isopentenyl-diphosphate delta-isomerase (349 aa).

5 to 6 (RK) contributes to the substrate binding site. FMN is bound by residues serine 62, 63 to 65 (AIT), serine 93, and asparagine 122. 93–95 (SQR) serves as a coordination point for substrate. Residue glutamine 151 participates in substrate binding. Glutamate 152 serves as a coordination point for Mg(2+). FMN-binding positions include lysine 183, threonine 213, 259 to 261 (GIR), and 280 to 281 (AL).

This sequence belongs to the IPP isomerase type 2 family. As to quaternary structure, homooctamer. Dimer of tetramers. FMN serves as cofactor. The cofactor is NADPH. Requires Mg(2+) as cofactor.

It localises to the cytoplasm. The catalysed reaction is isopentenyl diphosphate = dimethylallyl diphosphate. Functionally, involved in the biosynthesis of isoprenoids. Catalyzes the 1,3-allylic rearrangement of the homoallylic substrate isopentenyl (IPP) to its allylic isomer, dimethylallyl diphosphate (DMAPP). This Methanothermobacter thermautotrophicus (strain ATCC 29096 / DSM 1053 / JCM 10044 / NBRC 100330 / Delta H) (Methanobacterium thermoautotrophicum) protein is Isopentenyl-diphosphate delta-isomerase.